Here is a 580-residue protein sequence, read N- to C-terminus: Proline--tRNA ligase (580 aa).

Belongs to the class-II aminoacyl-tRNA synthetase family. ProS type 1 subfamily. Homodimer.

It is found in the cytoplasm. The catalysed reaction is tRNA(Pro) + L-proline + ATP = L-prolyl-tRNA(Pro) + AMP + diphosphate. Catalyzes the attachment of proline to tRNA(Pro) in a two-step reaction: proline is first activated by ATP to form Pro-AMP and then transferred to the acceptor end of tRNA(Pro). As ProRS can inadvertently accommodate and process non-cognate amino acids such as alanine and cysteine, to avoid such errors it has two additional distinct editing activities against alanine. One activity is designated as 'pretransfer' editing and involves the tRNA(Pro)-independent hydrolysis of activated Ala-AMP. The other activity is designated 'posttransfer' editing and involves deacylation of mischarged Ala-tRNA(Pro). The misacylated Cys-tRNA(Pro) is not edited by ProRS. This Maridesulfovibrio salexigens (strain ATCC 14822 / DSM 2638 / NCIMB 8403 / VKM B-1763) (Desulfovibrio salexigens) protein is Proline--tRNA ligase.